Reading from the N-terminus, the 519-residue chain is GMP synthase [glutamine-hydrolyzing] (519 aa).

The Glutamine amidotransferase type-1 domain occupies 4–201; the sequence is AILILDFGSQ…VHDICDAGYD (198 aa). C81 serves as the catalytic Nucleophile. Active-site residues include H175 and E177. The region spanning 202 to 394 is the GMPS ATP-PPase domain; the sequence is WNMPDYVEEA…LGLPRDLVFR (193 aa). 229-235 lines the ATP pocket; it reads SGGVDSS.

As to quaternary structure, homodimer.

It carries out the reaction XMP + L-glutamine + ATP + H2O = GMP + L-glutamate + AMP + diphosphate + 2 H(+). Its pathway is purine metabolism; GMP biosynthesis; GMP from XMP (L-Gln route): step 1/1. Catalyzes the synthesis of GMP from XMP. This Nitrosomonas eutropha (strain DSM 101675 / C91 / Nm57) protein is GMP synthase [glutamine-hydrolyzing].